Here is a 314-residue protein sequence, read N- to C-terminus: Hydroxyacyl-coenzyme A dehydrogenase, mitochondrial (314 aa).

Residues 1–12 (MAFVTRQFMRSV) constitute a mitochondrion transit peptide. Residues 34 to 39 (GGGLMG) and Asp57 each bind NAD(+). 2 residues coordinate CoA: Ser73 and Lys80. N6-succinyllysine is present on Lys80. Lys81 and Lys87 each carry N6-acetyllysine; alternate. Residues Lys81 and Lys87 each carry the N6-succinyllysine; alternate modification. Residue Glu122 participates in NAD(+) binding. At Lys125 the chain carries N6-acetyllysine. An NAD(+)-binding site is contributed by Lys127. Lys127 carries the N6-(2-hydroxyisobutyryl)lysine modification. Lys136 bears the N6-acetyllysine; alternate mark. Residue Lys136 is modified to N6-succinyllysine; alternate. Residues Ser149 and Asn173 each contribute to the NAD(+) site. CoA is bound at residue Ser149. Lys179 carries the N6-acetyllysine modification. 3 positions are modified to N6-acetyllysine; alternate: Lys185, Lys192, and Lys202. Lys185, Lys192, and Lys202 each carry N6-succinyllysine; alternate. At Lys206 the chain carries N6-succinyllysine. 2 positions are modified to N6-acetyllysine; alternate: Lys212 and Lys241. An N6-succinyllysine; alternate mark is found at Lys212 and Lys241. NAD(+) is bound at residue Lys305. Lys312 carries the N6-acetyllysine; alternate modification. N6-succinyllysine; alternate is present on Lys312.

It belongs to the 3-hydroxyacyl-CoA dehydrogenase family. In terms of assembly, homodimer. Interacts with GLUD1; this interaction inhibits the activation of glutamate dehydrogenase 1 (GLUD1). In terms of processing, succinylation at Lys-81, adjacent to a coenzyme A binding site. Desuccinylated by SIRT5. In terms of tissue distribution, expressed in liver, kidney, pancreas, heart and skeletal muscle.

The protein localises to the mitochondrion matrix. The catalysed reaction is a (3S)-3-hydroxyacyl-CoA + NAD(+) = a 3-oxoacyl-CoA + NADH + H(+). It carries out the reaction (3S)-3-hydroxybutanoyl-CoA + NAD(+) = acetoacetyl-CoA + NADH + H(+). The enzyme catalyses (3S)-hydroxydecanoyl-CoA + NAD(+) = 3-oxodecanoyl-CoA + NADH + H(+). It catalyses the reaction (3S)-hydroxyhexadecanoyl-CoA + NAD(+) = 3-oxohexadecanoyl-CoA + NADH + H(+). Its pathway is lipid metabolism; fatty acid beta-oxidation. Functionally, mitochondrial fatty acid beta-oxidation enzyme that catalyzes the third step of the beta-oxidation cycle for medium and short-chain 3-hydroxy fatty acyl-CoAs (C4 to C10). Plays a role in the control of insulin secretion by inhibiting the activation of glutamate dehydrogenase 1 (GLUD1), an enzyme that has an important role in regulating amino acid-induced insulin secretion. Plays a role in the maintenance of normal spermatogenesis through the reduction of fatty acid accumulation in the testes. This is Hydroxyacyl-coenzyme A dehydrogenase, mitochondrial (HADH) from Homo sapiens (Human).